Reading from the N-terminus, the 366-residue chain is RNA 3'-terminal phosphate cyclase (366 aa).

Residues glutamine 104, proline 131, tyrosine 294, aspartate 297, glutamine 298, and histidine 320 each contribute to the ATP site. Histidine 320 serves as the catalytic Tele-AMP-histidine intermediate.

The protein belongs to the RNA 3'-terminal cyclase family. Type 1 subfamily. In terms of tissue distribution, detected in retinal ganglion cells (RGCs) (at protein level).

Its subcellular location is the nucleus. The protein localises to the nucleoplasm. The catalysed reaction is a 3'-end 3'-phospho-ribonucleotide-RNA + ATP = a 3'-end 2',3'-cyclophospho-ribonucleotide-RNA + AMP + diphosphate. Catalyzes the conversion of 3'-phosphate to a 2',3'-cyclic phosphodiester at the end of RNA. The mechanism of action of the enzyme occurs in 3 steps: (A) adenylation of the enzyme by ATP; (B) transfer of adenylate to an RNA-N3'P to produce RNA-N3'PP5'A; (C) and attack of the adjacent 2'-hydroxyl on the 3'-phosphorus in the diester linkage to produce the cyclic end product. Likely functions in some aspects of cellular RNA processing. Function plays an important role in regulating axon regeneration by inhibiting central nervous system (CNS) axon regeneration following optic nerve injury. In Mus musculus (Mouse), this protein is RNA 3'-terminal phosphate cyclase.